We begin with the raw amino-acid sequence, 925 residues long: Nuclear factor of activated T-cells, cytoplasmic 2 (925 aa).

The disordered stretch occupies residues 1 to 95 (MNAPERQPQP…FGEPDRVGPQ (95 aa)). A Phosphoserine modification is found at Ser23. Residues 26 to 34 (DELDFSILF) carry the 9aaTAD motif. Phosphoserine occurs at positions 99, 107, and 110. The calcineurin-binding stretch occupies residues 111 to 116 (PRIEIT). Positions 119–199 (HELIQAVGPL…CVSPNNGGPD (81 aa)) are transactivation domain A (TAD-A). A phosphoserine mark is found at Ser148, Ser168, Ser171, Ser172, Ser174, Ser175, Ser177, and Ser180. A required for cytoplasmic retention of the phosphorylated form region spans residues 161-175 (YREPLCLSPASSGSS). A run of 2 repeats spans residues 184–200 (SPYT…GPDD) and 213–229 (SPRT…LAED). Residues 184–286 (SPYTSPCVSP…PQPSSHVAPQ (103 aa)) form a 3 X approximate SP repeats region. The disordered stretch occupies residues 195 to 297 (NGGPDDLCPQ…HGSPAGYPPV (103 aa)). 5 positions are modified to phosphoserine: Ser213, Ser217, Ser221, Ser236, and Ser243. The span at 214–224 (PRTSPIMSPRT) shows a compositional bias: polar residues. A Nuclear localization signal motif is present at residues 251 to 253 (KRR). 8 positions are modified to phosphoserine: Ser255, Ser268, Ser274, Ser276, Ser280, Ser326, Ser330, and Ser363. Over residues 264-281 (PPGASPQRSRSPSPQPSS) the composition is skewed to low complexity. One copy of the 3; approximate repeat lies at 272-286 (SRSPSPQPSSHVAPQ). The RHD domain occupies 392–574 (ASLPPLEWPL…NPIECSQRSA (183 aa)). A DNA-binding region spans residues 421–428 (RAHYETEG). Residues 664–666 (KRK) carry the Nuclear localization signal motif. 5 positions are modified to phosphoserine: Ser755, Ser757, Ser759, Ser856, and Ser859. The disordered stretch occupies residues 839–894 (PGTTRPGPPPVSQGQRLSPGSYPTVIQQQNATSQRAAKNGPPVSDQKEVLPAGVTI). Residues 862–874 (TVIQQQNATSQRA) are compositionally biased toward polar residues. The short motif at 904-913 (YLDDVNEIIR) is the Nuclear export signal element.

In terms of assembly, member of the multicomponent NFATC transcription complex that consists of at least two components, a pre-existing cytoplasmic component NFATC2 and an inducible nuclear component NFATC1. Other members such as NFATC4, NFATC3 or members of the activating protein-1 family, MAF, GATA4 and Cbp/p300 can also bind the complex. The phosphorylated form specifically interacts with XPO1; which mediates nuclear export. NFATC proteins bind to DNA as monomers. Interacts with NFATC2IP. Interacts with FOXP3. Interacts with TBX21 ('Thr-303' phosphorylated form). Interacts with KAT2A. Interacts with HOMER2 and HOMER3; this interaction competes with calcineurin/PPP3CA-binding and hence prevents NFATC2 dephosphorylation and activation. Interacts with protein phosphatase PPP3CA/calcineurin A. Interacts with AKAP5 (via leucine zipper domain); this is required for NFATC2/NFAT1 recruitment to CRAC channels. Post-translationally, in resting cells, phosphorylated by NFATC-kinase on at least 18 sites in the 99-363 region. Upon cell stimulation, all these sites except Ser-243 are dephosphorylated by calcineurin. Dephosphorylation induces a conformational change that simultaneously exposes an NLS and masks an NES, which results in nuclear localization. Simultaneously, Ser-53 or Ser-56 is phosphorylated; which is required for full transcriptional activity. In terms of processing, ubiquitinated in endothelial cells by RNF213 downstream of the non-canonical Wnt signaling pathway, leading to its degradation by the proteasome. In terms of tissue distribution, expressed in thymus, spleen, heart, testis, brain, placenta, muscle and pancreas. Isoform 1 is highly expressed in the small intestine, heart, testis, prostate, thymus, placenta and thyroid. Isoform 3 is highly expressed in stomach, uterus, placenta, trachea and thyroid.

It localises to the cytoplasm. The protein localises to the nucleus. In terms of biological role, plays a role in the inducible expression of cytokine genes in T-cells, especially in the induction of the IL-2, IL-3, IL-4, TNF-alpha or GM-CSF. Promotes invasive migration through the activation of GPC6 expression and WNT5A signaling pathway. Is involved in the negative regulation of chondrogenesis. Recruited by AKAP5 to ORAI1 pore-forming subunit of CRAC channels in Ca(2+) signaling microdomains where store-operated Ca(2+) influx is coupled to calmodulin and calcineurin signaling and activation of NFAT-dependent transcriptional responses. The protein is Nuclear factor of activated T-cells, cytoplasmic 2 (NFATC2) of Homo sapiens (Human).